The sequence spans 347 residues: Protein FAM50 homolog (347 aa).

Residues 77-113 (EDIVREREKKLAQKKEEKDREKLKALEAKQAEKDRQR) are compositionally biased toward basic and acidic residues. The interval 77–142 (EDIVREREKK…EDEEEPLEIK (66 aa)) is disordered. The span at 123-138 (PEEDEESFDDEDEEEP) shows a compositional bias: acidic residues.

This sequence belongs to the FAM50 family.

In Aedes aegypti (Yellowfever mosquito), this protein is Protein FAM50 homolog.